The primary structure comprises 97 residues: Signal recognition particle 19 kDa protein (97 aa).

Belongs to the SRP19 family. In terms of assembly, part of the signal recognition particle protein translocation system, which is composed of SRP and FtsY. Archaeal SRP consists of a 7S RNA molecule of 300 nucleotides and two protein subunits: SRP54 and SRP19.

It localises to the cytoplasm. Its function is as follows. Involved in targeting and insertion of nascent membrane proteins into the cytoplasmic membrane. Binds directly to 7S RNA and mediates binding of the 54 kDa subunit of the SRP. This chain is Signal recognition particle 19 kDa protein, found in Pyrobaculum calidifontis (strain DSM 21063 / JCM 11548 / VA1).